The sequence spans 251 residues: MSVTMRQMLEAGVHFGHQTRFWNPKMAPYIFGQRNKIHIVNLEHTLVMFRDALDYARRLAANKETILFVGTKRQARDIVKEEAIRCGAPYVNQRWLGGMLTNFKTIRQSIKRLQDMEKMVQDGTLNKLVKKEALDFQRELEKLNASLGGIKEMKGLPDAMFVIDVGYQKGTIIEANKLGIPVVGVVDTNHNPAGIQYVIPGNDDSSQAIRLYARAMADAILEGRNQAIQEIVEIGKTDSEVLSGQDLSADA.

It belongs to the universal ribosomal protein uS2 family.

This chain is Small ribosomal subunit protein uS2, found in Nitrosomonas eutropha (strain DSM 101675 / C91 / Nm57).